Consider the following 138-residue polypeptide: ATP synthase epsilon chain (138 aa).

This sequence belongs to the ATPase epsilon chain family. F-type ATPases have 2 components, CF(1) - the catalytic core - and CF(0) - the membrane proton channel. CF(1) has five subunits: alpha(3), beta(3), gamma(1), delta(1), epsilon(1). CF(0) has three main subunits: a, b and c.

It is found in the cell inner membrane. In terms of biological role, produces ATP from ADP in the presence of a proton gradient across the membrane. This chain is ATP synthase epsilon chain, found in Bartonella henselae (strain ATCC 49882 / DSM 28221 / CCUG 30454 / Houston 1) (Rochalimaea henselae).